Reading from the N-terminus, the 222-residue chain is Ras-related protein Rab-21 (222 aa).

The residue at position 2 (Ala-2) is an N-acetylalanine. Residues Gly-25, Gly-28, Lys-29, Thr-30, Ser-31, Asn-42, Asp-43, His-45, Thr-47, and Thr-48 each coordinate GTP. Mg(2+) is bound at residue Thr-30. The short motif at 40–53 (KFNDKHITTLQASF) is the Switch 1 element. Thr-48 and Asp-71 together coordinate Mg(2+). The Switch 2 motif lies at 73–91 (AGQERFHALGPIYYRDSNG). GTP is bound by residues Gly-74, Asn-129, Lys-130, Asp-132, Ala-160, and Lys-161. Residues Cys-218 and Cys-219 are each lipidated (S-geranylgeranyl cysteine). Cys-219 is subject to Cysteine methyl ester. Positions 220 to 222 (SSG) are cleaved as a propeptide — removed in mature form.

The protein belongs to the small GTPase superfamily. Rab family. In terms of assembly, interacts with the cytoplasmic tail of integrins ITGA1, ITGA2, ITGA5, ITGA6, ITGA11 and ITGB1; this interaction is dependent upon its GDP/GTP cycle. Interacts with RABGEF1 (via VPS9 domain). Interacts with ANKRD27. Interacts (in GTP-bound form) with VAMP8 in response to starvation; the interaction probably regulates VAMP8 endolysosomal trafficking. Interacts (active GTP-bound form) with TMED10; the interaction is indirect and regulates TMED10 abundance and localization at the Golgi. It depends on Mg(2+) as a cofactor.

The protein resides in the endoplasmic reticulum membrane. Its subcellular location is the golgi apparatus. It is found in the trans-Golgi network. The protein localises to the golgi apparatus membrane. It localises to the early endosome membrane. The protein resides in the cytoplasmic vesicle membrane. Its subcellular location is the cleavage furrow. It is found in the cell projection. The protein localises to the neuron projection. It catalyses the reaction GTP + H2O = GDP + phosphate + H(+). Its activity is regulated as follows. Regulated by guanine nucleotide exchange factors (GEFs) including ANKRD27 and RABGEF1, which promote the exchange of bound GDP for free GTP. Regulated by GTPase activating proteins (GAPs) which increase the GTP hydrolysis activity. Inhibited by GDP dissociation inhibitors (GDIs). Functionally, the small GTPases Rab are key regulators of intracellular membrane trafficking, from the formation of transport vesicles to their fusion with membranes. Rabs cycle between an inactive GDP-bound form and an active GTP-bound form that is able to recruit to membranes different sets of downstream effectors directly responsible for vesicle formation, movement, tethering and fusion. RAB21 is involved in membrane trafficking control. Regulates integrin internalization and recycling, but does not influence the traffic of endosomally translocated receptors in general. As a result, may regulate cell adhesion and migration. During the mitosis of adherent cells, controls the endosomal trafficking of integrins which is required for the successful completion of cytokinesis. Involved in neurite growth. Following SBF2/MTMT13-mediated activation in response to starvation-induced autophagy, binds to and regulates SNARE protein VAMP8 endolysosomal transport required for SNARE-mediated autophagosome-lysosome fusion. Modulates protein levels of the cargo receptors TMED2 and TMED10, and required for appropriate Golgi localization of TMED10. This Bos taurus (Bovine) protein is Ras-related protein Rab-21 (RAB21).